The primary structure comprises 66 residues: Toxin BomPI (66 aa).

The LCN-type CS-alpha/beta domain occupies 2 to 64 (RDAYIAQPEN…VPIRIEGKCH (63 aa)). Disulfide bonds link cysteine 12–cysteine 63, cysteine 16–cysteine 36, cysteine 22–cysteine 46, and cysteine 26–cysteine 48.

It belongs to the long (4 C-C) scorpion toxin superfamily. Sodium channel inhibitor family. Alpha subfamily. As to expression, expressed by the venom gland.

Its subcellular location is the secreted. In terms of biological role, alpha toxins bind voltage-independently at site-3 of sodium channels (Nav) and inhibit the inactivation of the activated channels, thereby blocking neuronal transmission. This Buthus occitanus mardochei (Moroccan scorpion) protein is Toxin BomPI.